A 471-amino-acid polypeptide reads, in one-letter code: Coagulation factor IX (471 aa).

A signal peptide spans 1-28 (MKHLNTVMAESPALITIFLLGYLLSTEC). The propeptide occupies 29-46 (AVFLDRENATKILTRPKR). The Ca(2+) site is built by Tyr47, Asn48, Glu53, Glu54, Glu61, Glu63, Glu66, Glu67, Glu72, Glu73, and Glu76. One can recognise a Gla domain in the interval 47–92 (YNSGKLEEFVRGNLERECIEERCSFEEAREVFENTEKTTEFWKQYV). Residues Glu53, Glu54, Glu61, Glu63, Glu66, Glu67, Glu72, Glu73, Glu76, Glu79, and Glu82 each carry the 4-carboxyglutamate modification. Glu61 provides a ligand contact to Mg(2+). Cys64 and Cys69 are disulfide-bonded. Residue Glu66 participates in Mg(2+) binding. Glu72 contacts Mg(2+). Glu76 lines the Mg(2+) pocket. Residue Glu82 coordinates Ca(2+). Mg(2+) is bound at residue Glu82. Thr85 is a glycosylation site (O-linked (GalNAc...) threonine). Ca(2+) is bound by residues Glu86, Asp93, Gly94, and Gln96. 4-carboxyglutamate is present on Glu86. A Mg(2+)-binding site is contributed by Glu86. The region spanning 93-129 (DGDQCESNPCLNGGICKDDISSYECWCQVGFEGRNCE) is the EGF-like 1; calcium-binding domain. Cystine bridges form between Cys97–Cys108, Cys102–Cys117, Cys119–Cys128, Cys134–Cys145, Cys141–Cys155, Cys157–Cys170, Cys178–Cys345, Cys262–Cys278, Cys392–Cys406, and Cys417–Cys445. O-linked (Glc...) serine glycosylation is present at Ser99. Residues Asp110 and Asp111 each contribute to the Ca(2+) site. Asp110 is modified ((3R)-3-hydroxyaspartate). The residue at position 114 (Ser114) is a Phosphoserine. An EGF-like 2 domain is found at 130 to 171 (LDATCNIKNGRCKQFCKNSPDNKVICSCTEGYQLAEDQKSCE). A propeptide spans 193–236 (AETVFSNMDYENSTEAVFIQDDITDGAILNNVTESSESLNDFTR) (activation peptide). Sulfotyrosine is present on Tyr202. N-linked (GlcNAc...) asparagine glycosylation occurs at Asn204. Residue Ser205 is modified to Phosphoserine. A Phosphothreonine; alternate modification is found at Thr206. O-linked (GalNAc...) threonine; alternate glycosylation occurs at Thr206. Asn223 is a glycosylation site (N-linked (GlcNAc...) asparagine). 2 O-linked (GalNAc...) threonine glycosylation sites follow: Thr225 and Thr235. The Peptidase S1 domain maps to 237–469 (VVGGENAKPG…YVNWIKEKTK (233 aa)). Catalysis depends on His277, which acts as the Charge relay system. 4 residues coordinate Ca(2+): Glu291, Asn293, Glu298, and Glu301. The Charge relay system role is filled by Asp325. The active-site Charge relay system is the Ser421.

It belongs to the peptidase S1 family. In terms of assembly, heterodimer of a light chain and a heavy chain; disulfide-linked. Interacts (inactive and activated) with F11 (activated) in calcium-dependent manner. Interacts with SERPINC1. Post-translationally, activated by factor XIa, which excises the activation peptide. The propeptide can also be removed by snake venom protease. Activated by coagulation factor VIIa-tissue factor (F7-F3) complex in calcium-dependent manner. The iron and 2-oxoglutarate dependent 3-hydroxylation of aspartate and asparagine is (R) stereospecific within EGF domains. In terms of processing, predominantly O-glucosylated at Ser-99 by POGLUT1 in vitro. In terms of tissue distribution, detected in liver.

It is found in the secreted. The enzyme catalyses Selective cleavage of Arg-|-Ile bond in factor X to form factor Xa.. In terms of biological role, factor IX is a vitamin K-dependent plasma protein that participates in the intrinsic pathway of blood coagulation by converting factor X to its active form in the presence of Ca(2+) ions, phospholipids, and factor VIIIa. This Mus musculus (Mouse) protein is Coagulation factor IX (F9).